Consider the following 95-residue polypeptide: Protein TusB (95 aa).

The protein belongs to the DsrH/TusB family. As to quaternary structure, heterohexamer, formed by a dimer of trimers. The hexameric TusBCD complex contains 2 copies each of TusB, TusC and TusD. The TusBCD complex interacts with TusE.

The protein localises to the cytoplasm. Its function is as follows. Part of a sulfur-relay system required for 2-thiolation of 5-methylaminomethyl-2-thiouridine (mnm(5)s(2)U) at tRNA wobble positions. The sequence is that of Protein TusB from Buchnera aphidicola subsp. Acyrthosiphon pisum (strain 5A).